Here is a 70-residue protein sequence, read N- to C-terminus: Protein SlyX homolog (70 aa).

This sequence belongs to the SlyX family.

The protein is Protein SlyX homolog of Shewanella sp. (strain MR-7).